A 360-amino-acid chain; its full sequence is Luc7-like protein (360 aa).

Residues 143–206 (KEQNSKITEL…QEKNENKRMS (64 aa)) adopt a coiled-coil conformation. The disordered stretch occupies residues 255–360 (LGRTDFYNAP…DDRRKRDRNY (106 aa)). The segment covering 269 to 293 (DSYRDDRRSSSSSYHDIDGRRDHRY) has biased composition (basic and acidic residues). Low complexity predominate over residues 312-321 (NNGRGSSRDN). Residues 329–360 (RDYRNDHGKDYDRKRERDYYNDDDRRKRDRNY) show a composition bias toward basic and acidic residues.

This sequence belongs to the Luc7 family.

Its subcellular location is the nucleus. May play a role in RNA splicing. The protein is Luc7-like protein (crop) of Dictyostelium discoideum (Social amoeba).